The following is a 232-amino-acid chain: Ornithine carbamoyltransferase (232 aa).

Carbamoyl phosphate contacts are provided by residues Gln15, Arg39, and 66 to 69 (HPTQ). Residues Asn99, Asp163, and 167–168 (SM) each bind L-ornithine. Carbamoyl phosphate contacts are provided by residues 204–207 (HCLP) and Thr232.

The protein belongs to the aspartate/ornithine carbamoyltransferase superfamily. OTCase family.

Its subcellular location is the cytoplasm. The enzyme catalyses carbamoyl phosphate + L-ornithine = L-citrulline + phosphate + H(+). Its pathway is amino-acid biosynthesis; L-arginine biosynthesis; L-arginine from L-ornithine and carbamoyl phosphate: step 1/3. Reversibly catalyzes the transfer of the carbamoyl group from carbamoyl phosphate (CP) to the N(epsilon) atom of ornithine (ORN) to produce L-citrulline. This is Ornithine carbamoyltransferase (argF) from Neisseria subflava.